The primary structure comprises 197 residues: MLTGLFFGSFNPMHIGHLALANYLTEYTPIRQLWFVPSPLNPLKNTQELLPYDLRCELIEQAIRKDIRFQVLRIEELLPSPHYTIRTLRALSMLYPHHRFALLIGADNWQSFDRWKDHHRLMAKYELIIYPRFGYEVNDTTLPTGCRYIHDAPRIEISSTQIRTSILEGKDLRYWLPLPESQDVIASALQSCLSPKR.

The protein belongs to the NadD family.

It carries out the reaction nicotinate beta-D-ribonucleotide + ATP + H(+) = deamido-NAD(+) + diphosphate. The protein operates within cofactor biosynthesis; NAD(+) biosynthesis; deamido-NAD(+) from nicotinate D-ribonucleotide: step 1/1. In terms of biological role, catalyzes the reversible adenylation of nicotinate mononucleotide (NaMN) to nicotinic acid adenine dinucleotide (NaAD). The protein is Probable nicotinate-nucleotide adenylyltransferase of Porphyromonas gingivalis (strain ATCC 33277 / DSM 20709 / CIP 103683 / JCM 12257 / NCTC 11834 / 2561).